A 758-amino-acid chain; its full sequence is Probable ubiquitin carboxyl-terminal hydrolase creB (758 aa).

A disordered region spans residues 1-27 (MGSFLRSFRRDVGSSTPSVGATPAKKE). The USP domain maps to 57–468 (FGMENYGNTC…CAYVLFYQET (412 aa)). Catalysis depends on Cys-66, which acts as the Nucleophile. Disordered regions lie at residues 116–148 (AEAQ…DSSE) and 243–268 (QPIP…SKTP). A compositionally biased stretch (polar residues) spans 253–268 (TTDSSRQSISSGSKTP). The active-site Proton acceptor is His-419. A disordered region spans residues 514–744 (IPVQDEPQRH…KGDRAGHGKW (231 aa)). Residues 554 to 563 (ATPPPVPPIP) show a composition bias toward pro residues. Residues 573 to 631 (KKSDIQSKKERAKEEKERKAAEKEMEKQRRKEQEARVKENQRREEAELKAALEASKASK) adopt a coiled-coil conformation. Basic and acidic residues-rich tracts occupy residues 573–650 (KKSD…DPKR) and 729–740 (DALKSPKGDRAG).

Belongs to the peptidase C19 family. As to quaternary structure, interacts with creA, creC and qutD.

It carries out the reaction Thiol-dependent hydrolysis of ester, thioester, amide, peptide and isopeptide bonds formed by the C-terminal Gly of ubiquitin (a 76-residue protein attached to proteins as an intracellular targeting signal).. Functionally, ubiquitin thioesterase component of the regulatory network controlling carbon source utilization through ubiquitination and deubiquitination involving creA, creB, creC, creD and acrB. Deubiquitinates the creA catabolic repressor and the quinate permease qutD. Also plays a role in response to carbon starvation and the control of extracellular proteases activity. The chain is Probable ubiquitin carboxyl-terminal hydrolase creB (creB) from Aspergillus niger (strain ATCC MYA-4892 / CBS 513.88 / FGSC A1513).